A 425-amino-acid chain; its full sequence is Serine--tRNA ligase (425 aa).

2 disordered regions span residues 43–69 (QRSSLQAEGNRIGKEVGQRIQQGSDPK) and 108–134 (LPNLPSPDCPEGRDENDNQERHRWGKP). The segment covering 117–134 (PEGRDENDNQERHRWGKP) has biased composition (basic and acidic residues). Residue 233 to 235 (TAE) coordinates L-serine. 264 to 266 (RRE) is a binding site for ATP. Glutamate 287 provides a ligand contact to L-serine. 351-354 (EISS) serves as a coordination point for ATP. Serine 385 contributes to the L-serine binding site.

This sequence belongs to the class-II aminoacyl-tRNA synthetase family. Type-1 seryl-tRNA synthetase subfamily. As to quaternary structure, homodimer. The tRNA molecule binds across the dimer.

It localises to the cytoplasm. The enzyme catalyses tRNA(Ser) + L-serine + ATP = L-seryl-tRNA(Ser) + AMP + diphosphate + H(+). It catalyses the reaction tRNA(Sec) + L-serine + ATP = L-seryl-tRNA(Sec) + AMP + diphosphate + H(+). It participates in aminoacyl-tRNA biosynthesis; selenocysteinyl-tRNA(Sec) biosynthesis; L-seryl-tRNA(Sec) from L-serine and tRNA(Sec): step 1/1. Functionally, catalyzes the attachment of serine to tRNA(Ser). Is also able to aminoacylate tRNA(Sec) with serine, to form the misacylated tRNA L-seryl-tRNA(Sec), which will be further converted into selenocysteinyl-tRNA(Sec). This is Serine--tRNA ligase from Prochlorococcus marinus (strain MIT 9313).